The chain runs to 105 residues: MYAIVEINGQQFKAEAGQKLFVHHIQNAENGATVEFDKVLLVDKDGNVTVGAPTVDGAKVVCQIVSSLVKGDKVLVFHKKRRKGHRKLNGHRQQFTELTITEVVA.

Belongs to the bacterial ribosomal protein bL21 family. In terms of assembly, part of the 50S ribosomal subunit. Contacts protein L20.

This protein binds to 23S rRNA in the presence of protein L20. This Bacteroides fragilis (strain YCH46) protein is Large ribosomal subunit protein bL21.